Consider the following 436-residue polypeptide: UDP-N-acetylmuramate--L-alanine ligase (436 aa).

111-117 (GTHGKTS) is an ATP binding site.

The protein belongs to the MurCDEF family.

The protein resides in the cytoplasm. The catalysed reaction is UDP-N-acetyl-alpha-D-muramate + L-alanine + ATP = UDP-N-acetyl-alpha-D-muramoyl-L-alanine + ADP + phosphate + H(+). Its pathway is cell wall biogenesis; peptidoglycan biosynthesis. Cell wall formation. The sequence is that of UDP-N-acetylmuramate--L-alanine ligase from Lactiplantibacillus plantarum (strain ATCC BAA-793 / NCIMB 8826 / WCFS1) (Lactobacillus plantarum).